A 507-amino-acid polypeptide reads, in one-letter code: Sulfatase (507 aa).

A signal peptide spans 1 to 18; sequence MKTRYFLLLGICMLSCRT. Ca(2+) is bound by residues Asp39, Asp40, and Cys79. Cys79 acts as the Nucleophile in catalysis. Cys79 bears the 3-oxoalanine (Cys) mark. The active site involves His139. Asp325 and His326 together coordinate Ca(2+).

This sequence belongs to the sulfatase family. The cofactor is Ca(2+). In terms of processing, the conversion to 3-oxoalanine (also known as C-formylglycine, FGly), of a serine or cysteine residue in prokaryotes and of a cysteine residue in eukaryotes, is critical for catalytic activity. This post-translational modification is severely defective in multiple sulfatase deficiency (MSD).

Its subcellular location is the periplasm. Functionally, sulfatase that may be involved in ulvan degradation. Ulvan is the main polysaccharide component of the Ulvales (green seaweed) cell wall. It is composed of disaccharide building blocks comprising 3-sulfated rhamnose (Rha3S) linked to D-glucuronic acid (GlcA), L-iduronic acid (IduA), or D-xylose (Xyl). Has no activity on different ulvan polymers. In Formosa agariphila (strain DSM 15362 / KCTC 12365 / LMG 23005 / KMM 3901 / M-2Alg 35-1), this protein is Sulfatase.